We begin with the raw amino-acid sequence, 76 residues long: Heat shock factor-binding protein 1 (76 aa).

It belongs to the HSBP1 family. As to quaternary structure, homohexamer. Associates with heptad repeats of HSF1 trimers and probably also HSF1 monomers, and with HSP70. Association with HSF1 trimers and HSP70 coincides with attenuation of heat shock response and the conversion of HSF1 trimer to monomer.

The protein resides in the nucleus. Functionally, negative regulator of the heat shock response. Negatively affects HSF1 DNA-binding activity. May have a role in the suppression of the activation of the stress response during the aging process. This chain is Heat shock factor-binding protein 1 (HSBP1), found in Pongo abelii (Sumatran orangutan).